Reading from the N-terminus, the 659-residue chain is Pro-secreted protein ORF2 (659 aa).

The first 23 residues, 1 to 23 (MRPRPLLLLFLLFLPMLPAPPTG), serve as a signal peptide directing secretion. Disordered regions lie at residues 19 to 43 (APPT…GFWG) and 64 to 107 (PDVA…TAGA). Residues 28 to 33 (RRRGRR) carry the Nuclear localization signal motif. Over residues 92–107 (QRPSAASRRRPATAGA) the composition is skewed to low complexity. N-linked (GlcNAc...) asparagine; by host glycans are attached at residues asparagine 137 and asparagine 310. The tract at residues 367 to 393 (IALTLLNLADTLLGGLPTELISSAGGQ) is particle formation. Asparagine 561 carries N-linked (GlcNAc...) asparagine; by host glycosylation. The oligomerization stretch occupies residues 584–609 (TTRLGAGPVAISAAAVLAPRSALALL).

It belongs to the hepevirus capsid protein family. As to quaternary structure, homodimer. In terms of assembly, self-assembles to form the capsid. The capsid is dominated by dimers that define the 30 morphological units. Interacts with phosphorylated protein ORF3. Interacts with host TMEM134. Interacts with host ASGR1 and ASGR2; these interactions facilitate infection of host hepatocytes. Cleaved by host protease in the N-terminus. In terms of processing, N-glycosylated. Post-translationally, not N-glycosylated. The C-terminus of the capsid protein ORF2 is truncated in non-enveloped virions shedded in feces, probably due to host proteases.

The protein localises to the secreted. It is found in the virion. Its subcellular location is the host cytoplasm. It localises to the host endoplasmic reticulum. The protein resides in the host Golgi apparatus. The protein localises to the host cell surface. It is found in the host nucleus. Functionally, plays a role in the inhibition of host antibody-mediated neutralization without blocking viral cell entry. In terms of biological role, forms an icosahedral capsid with a T=1 symmetry and a 34 nm diameter. The capsid is composed of 60 copies linked to each other. Binds to the 5' end of the genomic RNA to mediate genome encapsidation. Binds to heparin surface proteoglycans (HSPGs) to mediate viral entry. Additionally, the interactions with host ASGR1 and ASGR2 facilitate viral infection of hepatocytes. Inhibits IFN production by blocking host TBK1-induced IRF3 phosphorylation. The nuclear form probably modulates host gene expression. The sequence is that of Pro-secreted protein ORF2 from Bandicota bengalensis (lesser bandicoot rat).